A 583-amino-acid chain; its full sequence is GTP diphosphokinase CRSH1, chloroplastic (583 aa).

Over residues 1 to 13 (MATAATTSAAAIP) the composition is skewed to low complexity. The disordered stretch occupies residues 1–68 (MATAATTSAA…SSSSSTPAEG (68 aa)). The N-terminal 69 residues, 1-69 (MATAATTSAA…SSSSTPAEGG (69 aa)), are a transit peptide targeting the chloroplast. Residues 19–39 (RRQHPHPRRPGLRPRRLHRLR) are compositionally biased toward basic residues. Over residues 40 to 66 (LPAQAAAAAAASSPSTSSSSSSSSTPA) the composition is skewed to low complexity. The HD domain occupies 119–219 (ALARALAIAA…LELALKLDMM (101 aa)). 2 EF-hand domains span residues 473–508 (GDSN…LGAG) and 510–542 (KDAK…IELM). Ca(2+) is bound by residues Asp486, Asn488, Asp490, Arg492, Glu497, Asp520, Asn522, Asp524, Ser526, and Glu531.

This sequence belongs to the RelA/SpoT family. In terms of tissue distribution, expressed in roots and shoots.

The protein localises to the plastid. Its subcellular location is the chloroplast. The enzyme catalyses GTP + ATP = guanosine 3'-diphosphate 5'-triphosphate + AMP. Its activity is regulated as follows. Activated by calcium. Functionally, possesses calcium-dependent ppGpp (guanosine 3'-diphosphate 5'-diphosphate) synthetase activity in vitro and is able to functionally complement E.coli relA mutants. May be involved in a rapid plant ppGpp-mediated response to pathogens and other stresses. The polypeptide is GTP diphosphokinase CRSH1, chloroplastic (Oryza sativa subsp. japonica (Rice)).